Here is a 206-residue protein sequence, read N- to C-terminus: ATP phosphoribosyltransferase (206 aa).

It belongs to the ATP phosphoribosyltransferase family. Short subfamily. Heteromultimer composed of HisG and HisZ subunits.

The protein localises to the cytoplasm. The enzyme catalyses 1-(5-phospho-beta-D-ribosyl)-ATP + diphosphate = 5-phospho-alpha-D-ribose 1-diphosphate + ATP. Its pathway is amino-acid biosynthesis; L-histidine biosynthesis; L-histidine from 5-phospho-alpha-D-ribose 1-diphosphate: step 1/9. In terms of biological role, catalyzes the condensation of ATP and 5-phosphoribose 1-diphosphate to form N'-(5'-phosphoribosyl)-ATP (PR-ATP). Has a crucial role in the pathway because the rate of histidine biosynthesis seems to be controlled primarily by regulation of HisG enzymatic activity. This Geobacillus sp. (strain WCH70) protein is ATP phosphoribosyltransferase.